The sequence spans 764 residues: 5-methyltetrahydropteroyltriglutamate--homocysteine methyltransferase (764 aa).

Residues 16–19 (RELK) and Lys-115 contribute to the 5-methyltetrahydropteroyltri-L-glutamate site. Residues 435–437 (IGS) and Glu-488 contribute to the L-homocysteine site. L-methionine contacts are provided by residues 435 to 437 (IGS) and Glu-488. Residues 519–520 (RC) and Trp-565 each bind 5-methyltetrahydropteroyltri-L-glutamate. Asp-603 provides a ligand contact to L-homocysteine. An L-methionine-binding site is contributed by Asp-603. Glu-609 is a 5-methyltetrahydropteroyltri-L-glutamate binding site. Zn(2+) contacts are provided by His-645, Cys-647, and Glu-669. The active-site Proton donor is the His-698. Residue Cys-730 participates in Zn(2+) binding.

The protein belongs to the vitamin-B12 independent methionine synthase family. The cofactor is Zn(2+).

The catalysed reaction is 5-methyltetrahydropteroyltri-L-glutamate + L-homocysteine = tetrahydropteroyltri-L-glutamate + L-methionine. It participates in amino-acid biosynthesis; L-methionine biosynthesis via de novo pathway; L-methionine from L-homocysteine (MetE route): step 1/1. In terms of biological role, catalyzes the transfer of a methyl group from 5-methyltetrahydrofolate to homocysteine resulting in methionine formation. The sequence is that of 5-methyltetrahydropteroyltriglutamate--homocysteine methyltransferase from Burkholderia pseudomallei (strain K96243).